The sequence spans 116 residues: Ribosome-binding factor A (116 aa).

The protein belongs to the RbfA family. Monomer. Binds 30S ribosomal subunits, but not 50S ribosomal subunits or 70S ribosomes.

The protein localises to the cytoplasm. Its function is as follows. One of several proteins that assist in the late maturation steps of the functional core of the 30S ribosomal subunit. Associates with free 30S ribosomal subunits (but not with 30S subunits that are part of 70S ribosomes or polysomes). Required for efficient processing of 16S rRNA. May interact with the 5'-terminal helix region of 16S rRNA. This Clostridium botulinum (strain Eklund 17B / Type B) protein is Ribosome-binding factor A.